A 235-amino-acid polypeptide reads, in one-letter code: Ubiquitin-like-conjugating enzyme ATG10 (235 aa).

Cys196 serves as the catalytic Glycyl thioester intermediate.

The protein belongs to the ATG10 family. Forms homooligomers. Interacts with ATG7 and ATG12.

The protein resides in the preautophagosomal structure membrane. Functionally, E2-like enzyme required for the cytoplasm to vacuole transport (Cvt), autophagy and nucleophagy. Acts as an E2-like enzyme that catalyzes the conjugation of ATG12 to ATG5. ATG12 conjugation to ATG5 is required for proper localization of ATG8 to the preautophagosomal structure (PAS). Likely serves as an ATG5-recognition molecule. Autophagy is required for proper vegetative growth, asexual/sexual reproduction, and full virulence. Autophagy is particularly involved in the biosynthesis of deoxynivalenol (DON), an important virulence determinant. The sequence is that of Ubiquitin-like-conjugating enzyme ATG10 from Gibberella zeae (strain ATCC MYA-4620 / CBS 123657 / FGSC 9075 / NRRL 31084 / PH-1) (Wheat head blight fungus).